Here is a 434-residue protein sequence, read N- to C-terminus: Glutamate-1-semialdehyde 2,1-aminomutase (434 aa).

The residue at position 271 (Lys271) is an N6-(pyridoxal phosphate)lysine.

It belongs to the class-III pyridoxal-phosphate-dependent aminotransferase family. HemL subfamily. Homodimer. Pyridoxal 5'-phosphate is required as a cofactor.

The protein localises to the cytoplasm. It catalyses the reaction (S)-4-amino-5-oxopentanoate = 5-aminolevulinate. It participates in porphyrin-containing compound metabolism; protoporphyrin-IX biosynthesis; 5-aminolevulinate from L-glutamyl-tRNA(Glu): step 2/2. The protein operates within porphyrin-containing compound metabolism; chlorophyll biosynthesis. This is Glutamate-1-semialdehyde 2,1-aminomutase from Prochlorococcus marinus (strain MIT 9312).